The following is a 321-amino-acid chain: uncharacterized protein (321 aa).

The active-site Proton donor is tyrosine 49. Residue histidine 106 participates in substrate binding.

It belongs to the aldo/keto reductase family.

This is an uncharacterized protein from Caenorhabditis elegans.